A 172-amino-acid chain; its full sequence is Methylated-DNA--protein-cysteine methyltransferase (172 aa).

Cys142 serves as the catalytic Nucleophile; methyl group acceptor.

This sequence belongs to the MGMT family.

It localises to the cytoplasm. The catalysed reaction is a 6-O-methyl-2'-deoxyguanosine in DNA + L-cysteinyl-[protein] = S-methyl-L-cysteinyl-[protein] + a 2'-deoxyguanosine in DNA. It carries out the reaction a 4-O-methyl-thymidine in DNA + L-cysteinyl-[protein] = a thymidine in DNA + S-methyl-L-cysteinyl-[protein]. Involved in the cellular defense against the biological effects of O6-methylguanine (O6-MeG) and O4-methylthymine (O4-MeT) in DNA. Repairs the methylated nucleobase in DNA by stoichiometrically transferring the methyl group to a cysteine residue in the enzyme. This is a suicide reaction: the enzyme is irreversibly inactivated. The polypeptide is Methylated-DNA--protein-cysteine methyltransferase (Pyrococcus horikoshii (strain ATCC 700860 / DSM 12428 / JCM 9974 / NBRC 100139 / OT-3)).